Reading from the N-terminus, the 191-residue chain is Peptidyl-tRNA hydrolase (191 aa).

Y16 is a tRNA binding site. H21 serves as the catalytic Proton acceptor. The tRNA site is built by F66, N68, and N114.

It belongs to the PTH family. Monomer.

It localises to the cytoplasm. It carries out the reaction an N-acyl-L-alpha-aminoacyl-tRNA + H2O = an N-acyl-L-amino acid + a tRNA + H(+). In terms of biological role, hydrolyzes ribosome-free peptidyl-tRNAs (with 1 or more amino acids incorporated), which drop off the ribosome during protein synthesis, or as a result of ribosome stalling. Functionally, catalyzes the release of premature peptidyl moieties from peptidyl-tRNA molecules trapped in stalled 50S ribosomal subunits, and thus maintains levels of free tRNAs and 50S ribosomes. This Geotalea uraniireducens (strain Rf4) (Geobacter uraniireducens) protein is Peptidyl-tRNA hydrolase.